The chain runs to 576 residues: K(+)/H(+) antiporter NhaP2 (576 aa).

13 consecutive transmembrane segments (helical) span residues Ile6–Met26, Ile34–Leu54, Tyr58–Met78, Val87–Thr107, Met109–Val129, Pro163–Met183, Phe185–Gly205, Leu219–Ser239, Leu242–Thr262, Val271–Leu291, Ile299–Val319, Trp335–Met355, and Leu359–Val379. The RCK C-terminal domain occupies Ser405–Gln486.

Belongs to the monovalent cation:proton antiporter 1 (CPA1) transporter (TC 2.A.36) family. NhaP2 subfamily.

The protein localises to the cell inner membrane. It carries out the reaction K(+)(in) + H(+)(out) = K(+)(out) + H(+)(in). Its function is as follows. K(+)/H(+) antiporter that extrudes potassium in exchange for external protons and maintains the internal concentration of potassium under toxic levels. This is K(+)/H(+) antiporter NhaP2 from Shewanella baltica (strain OS223).